An 84-amino-acid polypeptide reads, in one-letter code: Acyl carrier protein homolog (84 aa).

A Carrier domain is found at 4–79 (RDILLKIKEI…ELIAEVKHLI (76 aa)). An O-(pantetheine 4'-phosphoryl)serine modification is found at S39.

Post-translationally, 4'-phosphopantetheine is transferred from CoA to a specific serine of the apo-ACP-like protein.

Its pathway is lipid metabolism; fatty acid biosynthesis. Functionally, carrier of the growing fatty acid chain in fatty acid biosynthesis. The sequence is that of Acyl carrier protein homolog from Mycoplasma pneumoniae (strain ATCC 29342 / M129 / Subtype 1) (Mycoplasmoides pneumoniae).